The chain runs to 120 residues: Large ribosomal subunit protein bL20 (120 aa).

This sequence belongs to the bacterial ribosomal protein bL20 family.

Binds directly to 23S ribosomal RNA and is necessary for the in vitro assembly process of the 50S ribosomal subunit. It is not involved in the protein synthesizing functions of that subunit. This is Large ribosomal subunit protein bL20 from Xanthobacter autotrophicus (strain ATCC BAA-1158 / Py2).